Consider the following 365-residue polypeptide: Galactoside alpha-(1,2)-fucosyltransferase 1 (365 aa).

Topologically, residues 1–8 are cytoplasmic; sequence MWPLSHRH. A helical; Signal-anchor for type II membrane protein membrane pass occupies residues 9 to 25; it reads LCLAFLLVCVLSAISFF. Residues 26 to 365 are Lumenal-facing; that stretch reads LHIYQDSIRH…LSPLWTLAEP (340 aa). Residues Asn-65, Asn-301, and Asn-327 are each glycosylated (N-linked (GlcNAc...) asparagine).

The protein belongs to the glycosyltransferase 11 family.

It localises to the golgi apparatus. The protein resides in the golgi stack membrane. It carries out the reaction a beta-D-galactosyl-(1-&gt;4)-N-acetyl-beta-D-glucosaminyl derivative + GDP-beta-L-fucose = an alpha-L-Fuc-(1-&gt;2)-beta-D-Gal-(1-&gt;4)-beta-D-GlcNAc derivative + GDP + H(+). It catalyses the reaction a ganglioside GA1 + GDP-beta-L-fucose = a ganglioside Fuc-GA1 + GDP + H(+). The catalysed reaction is a beta-D-Gal-(1-&gt;3)-beta-D-GlcNAc-(1-&gt;3)-beta-D-Gal-(1-&gt;4)-beta-D-Glc-(1&lt;-&gt;1')-Cer(d18:1(4E)) + GDP-beta-L-fucose = alpha-L-fucosyl-(1-&gt;2)- beta-D-galactosyl-(1-&gt;3)-N-acetyl-beta-D-glucosaminyl-(1-&gt;3)-beta-D-galactosyl-(1-&gt;4)-beta-D-glucosyl-(1&lt;-&gt;1')-N-acylsphing-4-enine + GDP + H(+). The enzyme catalyses a neolactoside nLc4Cer(d18:1(4E)) + GDP-beta-L-fucose = a neolactoside IV(2)-alpha-Fuc-nLc4Cer(d18:1(4E)) + GDP + H(+). It carries out the reaction a ganglioside GM1 + GDP-beta-L-fucose = a ganglioside Fuc-GM1 + GDP + H(+). It catalyses the reaction beta-D-galactosyl-(1-&gt;3)-N-acetyl-D-galactosamine + GDP-beta-L-fucose = alpha-L-fucosyl-(1-&gt;2)-beta-D-galactosyl-(1-&gt;3)-N-acetyl-D-galactosamine + GDP + H(+). It participates in protein modification; protein glycosylation. Its function is as follows. Catalyzes the transfer of L-fucose, from a guanosine diphosphate-beta-L-fucose, to the terminal galactose residue of glycoconjugates through an alpha(1,2) linkage leading to H antigen synthesis that is an intermediate substrate in the synthesis of ABO blood group antigens. H antigen is essential for maturation of the glomerular layer of the main olfactory bulb, in cell migration and early cell-cell contacts during tumor associated angiogenesis. Preferentially fucosylates soluble lactose and to a lesser extent fucosylates glycolipids gangliosides GA1 and GM1a. This is Galactoside alpha-(1,2)-fucosyltransferase 1 from Mico humeralifer (Black and white tassel-ear marmoset).